The chain runs to 124 residues: Small ribosomal subunit protein uS12 (124 aa).

The tract at residues 1-20 is disordered; sequence MATISQLVRNPRKDKVQKTS. The residue at position 89 (Asp89) is a 3-methylthioaspartic acid. The tract at residues 104 to 124 is disordered; sequence TSGVTARRKGRSKYGAKRPKA. Basic residues predominate over residues 109–124; it reads ARRKGRSKYGAKRPKA.

This sequence belongs to the universal ribosomal protein uS12 family. As to quaternary structure, part of the 30S ribosomal subunit. Contacts proteins S8 and S17. May interact with IF1 in the 30S initiation complex.

Its function is as follows. With S4 and S5 plays an important role in translational accuracy. Functionally, interacts with and stabilizes bases of the 16S rRNA that are involved in tRNA selection in the A site and with the mRNA backbone. Located at the interface of the 30S and 50S subunits, it traverses the body of the 30S subunit contacting proteins on the other side and probably holding the rRNA structure together. The combined cluster of proteins S8, S12 and S17 appears to hold together the shoulder and platform of the 30S subunit. This Psychromonas ingrahamii (strain DSM 17664 / CCUG 51855 / 37) protein is Small ribosomal subunit protein uS12.